We begin with the raw amino-acid sequence, 547 residues long: Elongator complex protein 3 (547 aa).

Positions 82-372 constitute a Radical SAM core domain; sequence RTASGIAVVA…YRVQRDIPMP (291 aa). 3 residues coordinate [4Fe-4S] cluster: Cys-99, Cys-109, and Cys-112. Position 161 is a phosphoserine (Ser-161). Lys-164 contacts acetyl-CoA. Tyr-202 is modified (phosphotyrosine; by ALK). Lys-229 carries the N6-methyllysine modification. Tyr-251 is subject to Phosphotyrosine. One can recognise an N-acetyltransferase domain in the interval 396–547; sequence IQCRDVRTRE…QGPYMVKMLK (152 aa). Acetyl-CoA is bound by residues 474–477, 497–499, and Tyr-530; these read ELHV and FGM.

It belongs to the ELP3 family. In terms of assembly, component of the elongator complex which consists of ELP1, ELP2, ELP3, ELP4, ELP5 and ELP6. ELP1, ELP2 and ELP3 form the elongator core complex. Interacts with alpha-tubulin. It depends on [4Fe-4S] cluster as a cofactor. Post-translationally, tyrosine-phosphorylated; phosphorylation on Tyr-202 does not affect elongator complex integrity or ELP3 protein stability. Also serine/threonine-phosphorylated. In terms of tissue distribution, expressed in the cerebellum and spinal motor neurons.

It localises to the cytoplasm. It is found in the nucleus. The catalysed reaction is uridine(34) in tRNA + acetyl-CoA + S-adenosyl-L-methionine + H2O = 5-(carboxymethyl)uridine(34) in tRNA + 5'-deoxyadenosine + L-methionine + CoA + 2 H(+). It participates in tRNA modification; 5-methoxycarbonylmethyl-2-thiouridine-tRNA biosynthesis. Catalytic tRNA acetyltransferase subunit of the elongator complex which is required for multiple tRNA modifications, including mcm5U (5-methoxycarbonylmethyl uridine), mcm5s2U (5-methoxycarbonylmethyl-2-thiouridine), and ncm5U (5-carbamoylmethyl uridine). In the elongator complex, acts as a tRNA uridine(34) acetyltransferase by mediating formation of carboxymethyluridine in the wobble base at position 34 in tRNAs. May also act as a protein lysine acetyltransferase by mediating acetylation of target proteins; such activity is however unclear in vivo and recent evidences suggest that ELP3 primarily acts as a tRNA acetyltransferase. Involved in neurogenesis: regulates the migration and branching of projection neurons in the developing cerebral cortex, through a process depending on alpha-tubulin acetylation. Required for acetylation of GJA1 in the developing cerebral cortex. In Homo sapiens (Human), this protein is Elongator complex protein 3.